A 76-amino-acid chain; its full sequence is Putative snRNP Sm-like protein (76 aa).

One can recognise a Sm domain in the interval 4-76 (RPLDVIHKSL…VLALSPVELE (73 aa)).

It belongs to the snRNP Sm proteins family.

This is Putative snRNP Sm-like protein from Thermococcus kodakarensis (strain ATCC BAA-918 / JCM 12380 / KOD1) (Pyrococcus kodakaraensis (strain KOD1)).